The sequence spans 858 residues: Bifunctional uridylyltransferase/uridylyl-removing enzyme (858 aa).

The tract at residues 1–324 (MSASVAAPPP…PATSGVTRVL (324 aa)) is uridylyltransferase. Residues 325–681 (SPGRFVEKQG…ARPSPVGDAL (357 aa)) are uridylyl-removing. One can recognise an HD domain in the interval 443 to 565 (VDQHILMVLR…VGNERRLTAL (123 aa)). 2 ACT domains span residues 682-761 (QVLV…PEPS) and 790-858 (ILSV…AIAV).

This sequence belongs to the GlnD family. It depends on Mg(2+) as a cofactor.

It carries out the reaction [protein-PII]-L-tyrosine + UTP = [protein-PII]-uridylyl-L-tyrosine + diphosphate. The enzyme catalyses [protein-PII]-uridylyl-L-tyrosine + H2O = [protein-PII]-L-tyrosine + UMP + H(+). With respect to regulation, uridylyltransferase (UTase) activity is inhibited by glutamine, while glutamine activates uridylyl-removing (UR) activity. Functionally, modifies, by uridylylation and deuridylylation, the PII regulatory proteins (GlnB and homologs), in response to the nitrogen status of the cell that GlnD senses through the glutamine level. Under low glutamine levels, catalyzes the conversion of the PII proteins and UTP to PII-UMP and PPi, while under higher glutamine levels, GlnD hydrolyzes PII-UMP to PII and UMP (deuridylylation). Thus, controls uridylylation state and activity of the PII proteins, and plays an important role in the regulation of nitrogen assimilation and metabolism. This chain is Bifunctional uridylyltransferase/uridylyl-removing enzyme, found in Burkholderia thailandensis (strain ATCC 700388 / DSM 13276 / CCUG 48851 / CIP 106301 / E264).